The chain runs to 156 residues: MNINLTLIGQSIAFAIFVWFCVKYVWPPITAAMEARQKKIADGLSAADRASLDLELAQEKATKELQKAKEEAAALIDQANKRAAQIVEASKEDARKEGEKLIEQARAEIQQERVQARDALRAEVATLAVAGAEKILETSVDAKAHSEMLEKLAAEL.

A helical membrane pass occupies residues 12–32; that stretch reads IAFAIFVWFCVKYVWPPITAA.

Belongs to the ATPase B chain family. As to quaternary structure, F-type ATPases have 2 components, F(1) - the catalytic core - and F(0) - the membrane proton channel. F(1) has five subunits: alpha(3), beta(3), gamma(1), delta(1), epsilon(1). F(0) has three main subunits: a(1), b(2) and c(10-14). The alpha and beta chains form an alternating ring which encloses part of the gamma chain. F(1) is attached to F(0) by a central stalk formed by the gamma and epsilon chains, while a peripheral stalk is formed by the delta and b chains.

The protein localises to the cell inner membrane. In terms of biological role, f(1)F(0) ATP synthase produces ATP from ADP in the presence of a proton or sodium gradient. F-type ATPases consist of two structural domains, F(1) containing the extramembraneous catalytic core and F(0) containing the membrane proton channel, linked together by a central stalk and a peripheral stalk. During catalysis, ATP synthesis in the catalytic domain of F(1) is coupled via a rotary mechanism of the central stalk subunits to proton translocation. Its function is as follows. Component of the F(0) channel, it forms part of the peripheral stalk, linking F(1) to F(0). In Marinobacter nauticus (strain ATCC 700491 / DSM 11845 / VT8) (Marinobacter aquaeolei), this protein is ATP synthase subunit b.